The sequence spans 187 residues: MSGGGTETPVGCEAAPGGGSKKRDSLGTAGSAHLIIKDLGEIHSRLLDHRPVIQGETRYFVKEFEEKRGLREMRVLENLKNMIHETNEHTLPKCRDTMRDSLSQVLQRLQAANDSVCRLQQREQERKKIHSDHLVASEKQHMLQWDNFMKEQPNKRAEVDEEHRKAMERLKEQYAEMEKDLAKFSTF.

The interval Met-1–Leu-26 is disordered. At Ser-2 the chain carries N-acetylserine. A coiled-coil region spans residues Asn-154–Thr-186.

It belongs to the BLOC1S5 family. As to quaternary structure, interacts with BLOC1S4, DTNBP1/BLOC1S7 and PI4K2A. Component of the biogenesis of lysosome-related organelles complex 1 (BLOC-1) composed of BLOC1S1, BLOC1S2, BLOC1S3, BLOC1S4, BLOC1S5, BLOC1S6, DTNBP1/BLOC1S7 and SNAPIN/BLOC1S8. Octamer composed of one copy each BLOC1S1, BLOC1S2, BLOC1S3, BLOC1S4, BLOC1S5, BLOC1S6, DTNBP1/BLOC1S7 and SNAPIN/BLOC1S8. The BLOC-1 complex associates with the AP-3 protein complex and membrane protein cargos. Interacts with BLOC1S6.

Functionally, component of the BLOC-1 complex, a complex that is required for normal biogenesis of lysosome-related organelles (LRO), such as platelet dense granules and melanosomes. In concert with the AP-3 complex, the BLOC-1 complex is required to target membrane protein cargos into vesicles assembled at cell bodies for delivery into neurites and nerve terminals. The BLOC-1 complex, in association with SNARE proteins, is also proposed to be involved in neurite extension. Plays a role in intracellular vesicle trafficking. The protein is Biogenesis of lysosome-related organelles complex 1 subunit 5 of Homo sapiens (Human).